Here is a 365-residue protein sequence, read N- to C-terminus: tRNA-specific 2-thiouridylase MnmA (365 aa).

ATP is bound by residues 6-13 (AMSGGVDS) and M32. The Nucleophile role is filled by C101. Residues C101 and C199 are joined by a disulfide bond. G125 contacts ATP. The interval 148-150 (KDQ) is interaction with tRNA. The Cysteine persulfide intermediate role is filled by C199.

Belongs to the MnmA/TRMU family.

It is found in the cytoplasm. The enzyme catalyses S-sulfanyl-L-cysteinyl-[protein] + uridine(34) in tRNA + AH2 + ATP = 2-thiouridine(34) in tRNA + L-cysteinyl-[protein] + A + AMP + diphosphate + H(+). Catalyzes the 2-thiolation of uridine at the wobble position (U34) of tRNA, leading to the formation of s(2)U34. This Kineococcus radiotolerans (strain ATCC BAA-149 / DSM 14245 / SRS30216) protein is tRNA-specific 2-thiouridylase MnmA.